A 446-amino-acid chain; its full sequence is NADH oxidase (446 aa).

Residues 7–11 (GCTHA), Glu-32, Cys-42, Val-79, 110–113 (TTGS), Lys-132, and Tyr-157 contribute to the FAD site. The Proton acceptor role is filled by His-10. Catalysis depends on Cys-42, which acts as the Redox-active. Cysteine sulfinic acid (-SO2H) is present on Cys-42. NAD(+) contacts are provided by residues 150–165 (VVVV…LVEA), Asp-177, Tyr-186, and Gly-243. Residues 271-281 (TSNPDIFAAGD), Leu-298, Ala-299, and Thr-300 each bind FAD. Residue Gly-328 coordinates NAD(+). Phe-424 serves as a coordination point for FAD.

Belongs to the class-III pyridine nucleotide-disulfide oxidoreductase family. As to quaternary structure, homodimer. It depends on FAD as a cofactor. In terms of processing, the N-terminus is blocked.

The catalysed reaction is 2 NADH + O2 + 2 H(+) = 2 NAD(+) + 2 H2O. Catalyzes the four-electron reduction of molecular oxygen to water. This is NADH oxidase (nox) from Enterococcus faecalis (strain ATCC 700802 / V583).